Consider the following 474-residue polypeptide: tRNA-2-methylthio-N(6)-dimethylallyladenosine synthase (474 aa).

Residues 3-120 form the MTTase N-terminal domain; that stretch reads QKLHIKTWGC…LPEMINQIRG (118 aa). Positions 12, 49, 83, 157, 161, and 164 each coordinate [4Fe-4S] cluster. The region spanning 143–375 is the Radical SAM core domain; sequence RAEGPTAFVS…QQRINNQAAQ (233 aa). Residues 378-441 enclose the TRAM domain; that stretch reads RAMLGTEQRV…TNSLRGEVVR (64 aa).

This sequence belongs to the methylthiotransferase family. MiaB subfamily. In terms of assembly, monomer. It depends on [4Fe-4S] cluster as a cofactor.

It localises to the cytoplasm. The enzyme catalyses N(6)-dimethylallyladenosine(37) in tRNA + (sulfur carrier)-SH + AH2 + 2 S-adenosyl-L-methionine = 2-methylsulfanyl-N(6)-dimethylallyladenosine(37) in tRNA + (sulfur carrier)-H + 5'-deoxyadenosine + L-methionine + A + S-adenosyl-L-homocysteine + 2 H(+). In terms of biological role, catalyzes the methylthiolation of N6-(dimethylallyl)adenosine (i(6)A), leading to the formation of 2-methylthio-N6-(dimethylallyl)adenosine (ms(2)i(6)A) at position 37 in tRNAs that read codons beginning with uridine. This chain is tRNA-2-methylthio-N(6)-dimethylallyladenosine synthase, found in Pasteurella multocida (strain Pm70).